The sequence spans 291 residues: Porphobilinogen deaminase (291 aa).

S-(dipyrrolylmethanemethyl)cysteine is present on cysteine 233.

Belongs to the HMBS family. As to quaternary structure, monomer. Dipyrromethane serves as cofactor.

It catalyses the reaction 4 porphobilinogen + H2O = hydroxymethylbilane + 4 NH4(+). Its pathway is porphyrin-containing compound metabolism; protoporphyrin-IX biosynthesis; coproporphyrinogen-III from 5-aminolevulinate: step 2/4. In terms of biological role, tetrapolymerization of the monopyrrole PBG into the hydroxymethylbilane pre-uroporphyrinogen in several discrete steps. The polypeptide is Porphobilinogen deaminase (hemC) (Ruminiclostridium josui (Clostridium josui)).